A 678-amino-acid chain; its full sequence is DNA mismatch repair protein MutL (678 aa).

Belongs to the DNA mismatch repair MutL/HexB family.

In terms of biological role, this protein is involved in the repair of mismatches in DNA. It is required for dam-dependent methyl-directed DNA mismatch repair. May act as a 'molecular matchmaker', a protein that promotes the formation of a stable complex between two or more DNA-binding proteins in an ATP-dependent manner without itself being part of a final effector complex. The polypeptide is DNA mismatch repair protein MutL (Lactiplantibacillus plantarum (strain ATCC BAA-793 / NCIMB 8826 / WCFS1) (Lactobacillus plantarum)).